The chain runs to 308 residues: Glutaminase (308 aa).

Residues S66, N117, E161, N168, Y192, Y244, and V262 each contribute to the substrate site.

The protein belongs to the glutaminase family. As to quaternary structure, homotetramer.

The catalysed reaction is L-glutamine + H2O = L-glutamate + NH4(+). The sequence is that of Glutaminase from Klebsiella pneumoniae subsp. pneumoniae (strain ATCC 700721 / MGH 78578).